The chain runs to 1275 residues: MVKMDVVRTTGFFLRSEPTTCRITTFAYSAEIIYFHAETTFLFEKIMKEGNELEKYSKIELNSEIWEDEEEEDNSGIVSQNERLMKLVNKQREIIYELHKDLEKVKKDNTSLRMRLSKYESTDSFPSSQPSRANSPQSDSYSSPYEKGKLFPKISLKSSKDVPTASAHISSSDHEKSSSVSLSALNNYNKTTDIKARSLDRLSDMTRPKLLLNTKRSHRSSEEPGASSPVTSPILKDSQKERIQALRNKAIKTYSVSTESAERIDSIRSDNLSPLSLNTSSFRRPITKPTPFNSDSNISIDPKDNNSNKQDHFAEIEDELRQQFLDIKVGRANASSPRRKSISIVKPHGISSPKHSTNNLSSKSGKFHSDFRVVSENVLLQARSETNSPIIENKEANNFLAPTSNVPAYSTPARPTESPPPPPISSSSTTPRPDDKPSLPPRGLSEDNDSLSLQKTGSSDTRRSSFSTLKIPDSDICFTRRRSDSNRTWTVIDPHHSQSFDNDILAEIPTSKLDNSSQKSPGKLSSKGLLNSFSPISPFSKSKSHNHHPSSQVEKSTSNSKGSMLPLDTLYNNKLSFRLDESLVRYLRFELMKTSLASLSPDFDCIGLQFVVGVSASSHLASQWKDEVWSFTRSIGECRSFATSFVLDIGAPPFPTLDWFTNDSSVIQNELLRRSVDTYFRYIFQTDLKLEQRIKLLEFLSSDTLREYLHDVFFLPPEHAQKEGVLLKYIENSGLVSRYFYLKDNILYFAENRNSPVLGTIHLKDAQVNRYNANLPIFSIIDPPHEFLTGENYQSAFVIQEKQTETRTGTATVHVLLARDVEDQKSWLRAILRQVPGSTSPLNASPFSVLSSDFPGSSRYRDQSSPIRFYGKADSRPVSQEAILSQDISSSPSPVLPPSENVASYADDSLVSNLTMSPKLRDSMEQVPLENHREFEISDRVSELSFDSSTGSVLEIADTRRNQDAPEKHVPVIEIQSSRPSLEKTDQSTPVELLIDSHSQNSQNEEKRSRMKFWAFPHHKAENYEQISDTNIPVIETNVMLSPSSTTSAEPLQKHIVRKSGIFGLPLNEAVNISTQFNDSGLPIVVYRCIEYLESCRAEKEEGIYRLSGSASTIKHLKEQFNEGVDYDLLSSDEEFDVHVIAGLLKLYLRNLPTNLLDTSMHKLFELLPNVPNDSAALGELCDVISKLPPENFALLDSLLHHLRRIIAFEKVNKMNIRNVCIVFSPTLNIPSDIFMMLILNYDHIFTDISRQTNGAQNESDSDVSDDNGEDNEFF.

Disordered regions lie at residues 118–146 (KYES…SPYE), 213–238 (NTKR…LKDS), 280–306 (SSFR…KDNN), and 335–365 (SSPR…SKSG). Positions 122–143 (TDSFPSSQPSRANSPQSDSYSS) are enriched in polar residues. Composition is skewed to polar residues over residues 290 to 299 (TPFNSDSNIS) and 353 to 364 (PKHSTNNLSSKS). Position 388 is a phosphoserine (Ser-388). Disordered regions lie at residues 390–466 (IIEN…RSSF) and 539–561 (FSKS…SNSK). Polar residues-rich tracts occupy residues 450–466 (SLSL…RSSF) and 552–561 (QVEKSTSNSK). One can recognise a PH domain in the interval 719-836 (HAQKEGVLLK…WLRAILRQVP (118 aa)). Residues 957–971 (ADTRRNQDAPEKHVP) are compositionally biased toward basic and acidic residues. Disordered regions lie at residues 957–988 (ADTR…TDQS) and 1254–1275 (NGAQ…NEFF). The Rho-GAP domain maps to 1065 to 1275 (LPLNEAVNIS…DDNGEDNEFF (211 aa)). The segment covering 1260 to 1275 (SDSDVSDDNGEDNEFF) has biased composition (acidic residues).

The protein resides in the nucleus. In terms of biological role, GTPase-activating protein for Rho-type proteins. This chain is Probable Rho-type GTPase-activating protein 2 (rga2), found in Schizosaccharomyces pombe (strain 972 / ATCC 24843) (Fission yeast).